The following is a 147-amino-acid chain: Large ribosomal subunit protein bL9 (147 aa).

Belongs to the bacterial ribosomal protein bL9 family.

Functionally, binds to the 23S rRNA. The protein is Large ribosomal subunit protein bL9 of Bacteroides fragilis (strain ATCC 25285 / DSM 2151 / CCUG 4856 / JCM 11019 / LMG 10263 / NCTC 9343 / Onslow / VPI 2553 / EN-2).